A 93-amino-acid chain; its full sequence is Putative aspartate aminotransferase (93 aa).

Belongs to the class-I pyridoxal-phosphate-dependent aminotransferase family. Homodimer. Requires pyridoxal 5'-phosphate as cofactor.

The protein localises to the cytoplasm. The catalysed reaction is L-aspartate + 2-oxoglutarate = oxaloacetate + L-glutamate. The polypeptide is Putative aspartate aminotransferase (Methylorubrum extorquens (Methylobacterium dichloromethanicum)).